The chain runs to 209 residues: ATP-dependent Clp protease proteolytic subunit (209 aa).

Ser107 serves as the catalytic Nucleophile. His132 is an active-site residue.

Belongs to the peptidase S14 family. As to quaternary structure, fourteen ClpP subunits assemble into 2 heptameric rings which stack back to back to give a disk-like structure with a central cavity, resembling the structure of eukaryotic proteasomes.

Its subcellular location is the cytoplasm. It carries out the reaction Hydrolysis of proteins to small peptides in the presence of ATP and magnesium. alpha-casein is the usual test substrate. In the absence of ATP, only oligopeptides shorter than five residues are hydrolyzed (such as succinyl-Leu-Tyr-|-NHMec, and Leu-Tyr-Leu-|-Tyr-Trp, in which cleavage of the -Tyr-|-Leu- and -Tyr-|-Trp bonds also occurs).. Functionally, cleaves peptides in various proteins in a process that requires ATP hydrolysis. Has a chymotrypsin-like activity. Plays a major role in the degradation of misfolded proteins. This chain is ATP-dependent Clp protease proteolytic subunit, found in Ruegeria pomeroyi (strain ATCC 700808 / DSM 15171 / DSS-3) (Silicibacter pomeroyi).